The primary structure comprises 120 residues: uncharacterized protein (120 aa).

This is an uncharacterized protein from Mycobacterium tuberculosis (strain CDC 1551 / Oshkosh).